The sequence spans 205 residues: Large ribosomal subunit protein uL4 (205 aa).

Polar residues predominate over residues 43–60; sequence ARSGNRAQQTRAEVSAST. The interval 43–96 is disordered; that stretch reads ARSGNRAQQTRAEVSASTHKPWRQKGTGRARSGRASSPIWRGGGVTFPNKPNEN. The span at 62 to 74 shows a compositional bias: basic residues; sequence KPWRQKGTGRARS.

Belongs to the universal ribosomal protein uL4 family. In terms of assembly, part of the 50S ribosomal subunit.

In terms of biological role, one of the primary rRNA binding proteins, this protein initially binds near the 5'-end of the 23S rRNA. It is important during the early stages of 50S assembly. It makes multiple contacts with different domains of the 23S rRNA in the assembled 50S subunit and ribosome. Forms part of the polypeptide exit tunnel. This chain is Large ribosomal subunit protein uL4, found in Thiobacillus denitrificans (strain ATCC 25259 / T1).